The primary structure comprises 305 residues: Guanine nucleotide-binding protein subunit beta (305 aa).

WD repeat units follow at residues 19–49 (NKLG…LVWD), 61–91 (APSV…VVYD), 104–133 (GHAG…MFWD), 145–176 (GHEM…KLWD), 188–218 (GNTS…RCFD), 231–260 (PSSS…EVWD), and 272–302 (GHEN…RLWS).

It belongs to the WD repeat G protein beta family. As to quaternary structure, g proteins are composed of 3 units, alpha, beta and gamma. Binding of the beta-gamma subunit complex (git5-git11) to the alpha subunit (gpa2) facilitates interaction with GPCR git3.

The protein resides in the cell membrane. Its subcellular location is the cytoplasm. The protein localises to the nucleus. Its function is as follows. Beta subunit of the heterotrimeric guanine nucleotide-binding protein (G protein) involved in glucose-induced cAMP signaling. The beta-gamma subunits (git5-git11) promote binding of the alpha subunit gpa2 to GPCR git3, which senses extracellular glucose, to activate cAMP-PKA signaling and repress sexual development and gluconeogenesis. This Schizosaccharomyces pombe (strain 972 / ATCC 24843) (Fission yeast) protein is Guanine nucleotide-binding protein subunit beta (git5).